The primary structure comprises 327 residues: Zinc finger C2HC domain-containing protein 1A (327 aa).

The C2HC/C3H-type 1 zinc-finger motif lies at 13-42 (ELVPCKICGRSFFPKVLKKHVPICQKTAAK). Residues Cys17, Cys20, His32, and Cys36 each contribute to the Zn(2+) site. 2 disordered regions span residues 40 to 96 (AAKR…KHEE) and 108 to 131 (NQVI…DYIQ). Positions 46-56 (VFDSGRQRAEG) are enriched in basic and acidic residues. Low complexity predominate over residues 63 to 76 (KPIKPKLQSSSSSS). Residues 116–125 (PLPPPPPPSY) show a composition bias toward pro residues. The C2HC/C3H-type 2 zinc-finger motif lies at 128–157 (DYIQCPYCQRRFGENAADRHIKFCKEQASR). Cys132, Cys135, His147, and Cys151 together coordinate Zn(2+). The tract at residues 154-271 (QASRISNKSK…NPSTGIGMNK (118 aa)) is disordered. The span at 187-199 (NSPTASSVSSRLP) shows a compositional bias: polar residues. The segment covering 211–229 (GIPSSKPSSTGSIKSTPSG) has biased composition (low complexity). Polar residues-rich tracts occupy residues 233 to 245 (LRNN…SPPS) and 255 to 267 (VSQS…STGI).

This sequence belongs to the ZC2HC1 family. It depends on Zn(2+) as a cofactor.

The protein is Zinc finger C2HC domain-containing protein 1A (zc2hc1a) of Danio rerio (Zebrafish).